The primary structure comprises 66 residues: Large ribosomal subunit protein bL31 (66 aa).

Residues Cys16, Cys18, Cys36, and Cys39 each contribute to the Zn(2+) site.

This sequence belongs to the bacterial ribosomal protein bL31 family. Type A subfamily. Part of the 50S ribosomal subunit. Requires Zn(2+) as cofactor.

Functionally, binds the 23S rRNA. The polypeptide is Large ribosomal subunit protein bL31 (Geobacillus thermodenitrificans (strain NG80-2)).